Consider the following 117-residue polypeptide: DNA-binding protein DDB_G0278111 (117 aa).

The tract at residues 1–40 (MSSEKEIQQQLSQMQGQGFDPEAQQRQEAQRQEANERRQG) is disordered. The span at 8 to 22 (QQQLSQMQGQGFDPE) shows a compositional bias: low complexity. Over residues 23–39 (AQQRQEAQRQEANERRQ) the composition is skewed to basic and acidic residues.

It belongs to the PDCD5 family.

The polypeptide is DNA-binding protein DDB_G0278111 (Dictyostelium discoideum (Social amoeba)).